The chain runs to 42 residues: Photosystem I reaction center subunit IX (42 aa).

The helical transmembrane segment at 7–27 (YLSTAPVLATLWFGFLAGLLI) threads the bilayer.

Belongs to the PsaJ family.

Its subcellular location is the plastid. The protein localises to the chloroplast thylakoid membrane. Functionally, may help in the organization of the PsaE and PsaF subunits. The chain is Photosystem I reaction center subunit IX from Psilotum nudum (Whisk fern).